Consider the following 230-residue polypeptide: Large ribosomal subunit protein uL4 (230 aa).

The tract at residues 59-113 (RQGTHATKTRGEVSGGGKKPYRQKGTGRARQGSTRAPQFTGGGTVHGPQPRDYSQ) is disordered.

The protein belongs to the universal ribosomal protein uL4 family. Part of the 50S ribosomal subunit.

Its function is as follows. One of the primary rRNA binding proteins, this protein initially binds near the 5'-end of the 23S rRNA. It is important during the early stages of 50S assembly. It makes multiple contacts with different domains of the 23S rRNA in the assembled 50S subunit and ribosome. Functionally, forms part of the polypeptide exit tunnel. The polypeptide is Large ribosomal subunit protein uL4 (Nocardia farcinica (strain IFM 10152)).